The primary structure comprises 1314 residues: Angiotensin-converting enzyme (1314 aa).

An N-terminal signal peptide occupies residues 1 to 35 (MGAASGQRGQGPPSPLLLLWLSLLLLLLPPSPAPA). The Extracellular portion of the chain corresponds to 36–1265 (LDPGLQPGNF…LEPQQARVGQ (1230 aa)). 5 N-linked (GlcNAc...) asparagine glycosylation sites follow: asparagine 44, asparagine 60, asparagine 80, asparagine 117, and asparagine 166. 2 Peptidase M2 domains span residues 46–630 (SADE…LGWP) and 649–1228 (VTDE…LGWP). A disulfide bond links cysteine 163 and cysteine 171. Tyrosine 237 contacts chloride. Asparagine 324 carries N-linked (GlcNAc...) asparagine glycosylation. A disulfide bridge links cysteine 365 with cysteine 383. Histidine 396 contributes to the Zn(2+) binding site. Glutamate 397 serves as the catalytic Proton acceptor 1. The Zn(2+) site is built by histidine 400 and glutamate 424. Asparagine 515 carries an N-linked (GlcNAc...) asparagine glycan. Histidine 526 functions as the Proton donor 1 in the catalytic mechanism. Arginine 535 serves as a coordination point for chloride. Cysteine 551 and cysteine 563 form a disulfide bridge. Residues asparagine 683, asparagine 701, asparagine 720, and asparagine 766 are each glycosylated (N-linked (GlcNAc...) asparagine). Cysteine 763 and cysteine 769 are joined by a disulfide. Chloride is bound by residues arginine 797 and tyrosine 835. A glycan (N-linked (GlcNAc...) asparagine) is linked at asparagine 948. The cysteines at positions 963 and 981 are disulfide-linked. Histidine 994 contacts Zn(2+). Glutamate 995 (proton acceptor 2) is an active-site residue. Zn(2+)-binding residues include histidine 998 and glutamate 1022. The chloride site is built by tryptophan 1096 and arginine 1100. Histidine 1124 acts as the Proton donor 2 in catalysis. Arginine 1133 lines the chloride pocket. A disulfide bridge connects residues cysteine 1149 and cysteine 1161. Residue asparagine 1197 is glycosylated (N-linked (GlcNAc...) asparagine). The tract at residues 1221–1262 (HGETLGWPEYNWTPNTARSEGPFPESGRVNFLGMYLEPQQAR) is juxtamembrane stalk. A helical transmembrane segment spans residues 1266–1282 (WVLLFLGVSLLVATLGL). Topologically, residues 1283-1314 (THRLFSIRQHGHSLHRPHRGPQFGSEVELRHS) are cytoplasmic. The segment at 1293–1314 (GHSLHRPHRGPQFGSEVELRHS) is disordered. Phosphoserine is present on serine 1307.

The protein belongs to the peptidase M2 family. In terms of assembly, monomer and homodimer; homodimerizes following binding to an inhibitor. Interacts with calmodulin (CALM1, CALM2 or CALM3); interaction takes place in the cytoplasmic region and regulates phosphorylation and proteolytic cleavage. It depends on Zn(2+) as a cofactor. Chloride is required as a cofactor. Post-translationally, produced following proteolytic cleavage by secretase enzymes that cleave the transmembrane form in the juxtamembrane stalk region upstream of the transmembrane region. Cleavage can take place at different sites of the juxtamembrane stalk region. Phosphorylated by CK2 on Ser-1307; which allows membrane retention. Phosphorylated on tyrosine residues on its extracellular part, promoting cleavage by secretase enzymes and formation of the soluble form (Angiotensin-converting enzyme, soluble form). In terms of tissue distribution, widely expressed with dominant expression in lung and kidney.

The protein localises to the cell membrane. Its subcellular location is the cytoplasm. The protein resides in the secreted. The catalysed reaction is Release of a C-terminal dipeptide, oligopeptide-|-Xaa-Yaa, when Xaa is not Pro, and Yaa is neither Asp nor Glu. Thus, conversion of angiotensin I to angiotensin II, with increase in vasoconstrictor activity, but no action on angiotensin II.. It carries out the reaction angiotensin I + H2O = L-histidyl-L-leucine + angiotensin II. The enzyme catalyses bradykinin + H2O = L-Phe-L-Arg + bradykinin(1-7). It catalyses the reaction substance P + H2O = substance P(1-9) + L-Leu-L-Met-NH2. The catalysed reaction is substance P + H2O = substance P(1-8) + Gly-L-Leu-L-Met-NH2. It carries out the reaction substance P + H2O = L-Phe-L-Phe-Gly-L-Leu-L-Met-NH2 + substance P(1-6). The enzyme catalyses neurotensin + H2O = neurotensin(1-11) + L-isoleucyl-L-leucine. It catalyses the reaction goralatide + H2O = N-acetyl-L-seryl-L-aspartate + L-lysyl-L-proline. The catalysed reaction is Met-enkephalin + H2O = L-phenylalanyl-L-methionine + L-tyrosylglycylglycine. It carries out the reaction Leu-enkephalin + H2O = L-tyrosylglycylglycine + L-phenylalanyl-L-leucine. The enzyme catalyses Met-enkephalin-Arg-Phe + H2O = L-arginyl-L-phenylalanine + Met-enkephalin. Its activity is regulated as follows. The dipeptidyl carboxypeptidase activity is strongly activated by chloride. The dipeptidyl carboxypeptidase activity is specifically inhibited by lisinopril, captopril and enalaprilat. With respect to regulation, strongly inhibited by lisinopril and captopril. Dipeptidyl carboxypeptidase that removes dipeptides from the C-terminus of a variety of circulating hormones, such as angiotensin I, bradykinin or enkephalins, thereby playing a key role in the regulation of blood pressure, electrolyte homeostasis or synaptic plasticity. Composed of two similar catalytic domains, each possessing a functional active site, with different selectivity for substrates. Plays a major role in the angiotensin-renin system that regulates blood pressure and sodium retention by the kidney by converting angiotensin I to angiotensin II, resulting in an increase of the vasoconstrictor activity of angiotensin. Also able to inactivate bradykinin, a potent vasodilator, and therefore enhance the blood pressure response. Acts as a regulator of synaptic transmission by mediating cleavage of neuropeptide hormones, such as substance P, neurotensin or enkephalins. Catalyzes degradation of different enkephalin neuropeptides (Met-enkephalin, Leu-enkephalin, Met-enkephalin-Arg-Phe and possibly Met-enkephalin-Arg-Gly-Leu). Acts as a regulator of synaptic plasticity in the nucleus accumbens of the brain by mediating cleavage of Met-enkephalin-Arg-Phe, a strong ligand of Mu-type opioid receptor OPRM1, into Met-enkephalin. Met-enkephalin-Arg-Phe cleavage by ACE decreases activation of OPRM1, leading to long-term synaptic potentiation of glutamate release. Also acts as a regulator of hematopoietic stem cell differentiation by mediating degradation of hemoregulatory peptide N-acetyl-SDKP (AcSDKP). Acts as a regulator of cannabinoid signaling pathway by mediating degradation of hemopressin, an antagonist peptide of the cannabinoid receptor CNR1. Involved in amyloid-beta metabolism by catalyzing degradation of Amyloid-beta protein 40 and Amyloid-beta protein 42 peptides, thereby preventing plaque formation. Catalyzes cleavage of cholecystokinin (maturation of Cholecystokinin-8 and Cholecystokinin-5) and Gonadoliberin-1 (both maturation and degradation) hormones. Degradation of hemoregulatory peptide N-acetyl-SDKP (AcSDKP) and amyloid-beta proteins is mediated by the N-terminal catalytic domain, while angiotensin I and cholecystokinin cleavage is mediated by the C-terminal catalytic region. Functionally, soluble form that is released in blood plasma and other body fluids following proteolytic cleavage in the juxtamembrane stalk region. In terms of biological role, isoform produced by alternative promoter usage that is specifically expressed in spermatocytes and adult testis, and which is required for male fertility. In contrast to somatic isoforms, only contains one catalytic domain. Acts as a dipeptidyl carboxypeptidase that removes dipeptides from the C-terminus of substrates. The identity of substrates that are needed for male fertility is unknown. May also have a glycosidase activity which releases GPI-anchored proteins from the membrane by cleaving the mannose linkage in the GPI moiety. The GPIase activity was reported to be essential for the egg-binding ability of the sperm. This activity is however unclear and has been challenged by other groups, suggesting that it may be indirect. The protein is Angiotensin-converting enzyme of Mesocricetus auratus (Golden hamster).